The sequence spans 255 residues: Ribosomal RNA small subunit methyltransferase A (255 aa).

Asparagine 12, leucine 14, glycine 39, glutamate 60, aspartate 84, and asparagine 106 together coordinate S-adenosyl-L-methionine.

It belongs to the class I-like SAM-binding methyltransferase superfamily. rRNA adenine N(6)-methyltransferase family. RsmA subfamily.

It localises to the cytoplasm. It catalyses the reaction adenosine(1518)/adenosine(1519) in 16S rRNA + 4 S-adenosyl-L-methionine = N(6)-dimethyladenosine(1518)/N(6)-dimethyladenosine(1519) in 16S rRNA + 4 S-adenosyl-L-homocysteine + 4 H(+). Specifically dimethylates two adjacent adenosines (A1518 and A1519) in the loop of a conserved hairpin near the 3'-end of 16S rRNA in the 30S particle. May play a critical role in biogenesis of 30S subunits. This Janthinobacterium sp. (strain Marseille) (Minibacterium massiliensis) protein is Ribosomal RNA small subunit methyltransferase A.